The following is a 568-amino-acid chain: Pyruvate carboxylase subunit B (568 aa).

Residues 4-264 form the Pyruvate carboxyltransferase domain; the sequence is IKVVETAFRD…DTGLDLEILK (261 aa). Residues 12-16 and Arg83 contribute to the substrate site; that span reads RDAHQ. Asp13 lines the a divalent metal cation pocket. Lys174, His203, and His205 together coordinate a divalent metal cation. Lys174 carries the post-translational modification N6-carboxylysine. Thr339 contacts substrate. The Biotinyl-binding domain occupies 493-568; sequence PEPVDVEGAV…ETGDIIMVIK (76 aa). The residue at position 534 (Lys534) is an N6-biotinyllysine.

Heterooctamer of four A and four B subunits. The cofactor is Mg(2+). Mn(2+) is required as a cofactor. Requires Co(2+) as cofactor.

It catalyses the reaction hydrogencarbonate + pyruvate + ATP = oxaloacetate + ADP + phosphate + H(+). Inhibited by ADP and alpha-ketoglutarate. Functionally, pyruvate carboxylase catalyzes a 2-step reaction, involving the ATP-dependent carboxylation of the covalently attached biotin in the first step and the transfer of the carboxyl group to pyruvate in the second. The polypeptide is Pyruvate carboxylase subunit B (pycB) (Methanothermobacter thermautotrophicus (strain ATCC 29096 / DSM 1053 / JCM 10044 / NBRC 100330 / Delta H) (Methanobacterium thermoautotrophicum)).